The following is a 369-amino-acid chain: UDP-glucose 4-epimerase 4 (369 aa).

19-50 (TVLVTGGAGYIGSHTVLQLLAAGFRVVVADSL) provides a ligand contact to NAD(+). Ser144 contacts substrate. Catalysis depends on Tyr168, which acts as the Proton acceptor.

This sequence belongs to the NAD(P)-dependent epimerase/dehydratase family. It depends on NAD(+) as a cofactor.

The catalysed reaction is UDP-alpha-D-glucose = UDP-alpha-D-galactose. It participates in carbohydrate metabolism; galactose metabolism. Catalyzes the interconversion between UDP-glucose and UDP-galactose. The polypeptide is UDP-glucose 4-epimerase 4 (UGE-4) (Oryza sativa subsp. japonica (Rice)).